We begin with the raw amino-acid sequence, 474 residues long: tRNA-2-methylthio-N(6)-dimethylallyladenosine synthase (474 aa).

The 118-residue stretch at 3–120 (KKLHIKTWGC…LPEMINAVRG (118 aa)) folds into the MTTase N-terminal domain. [4Fe-4S] cluster-binding residues include C12, C49, C83, C157, C161, and C164. Positions 143-375 (RADGPTAFVS…QERINQQAMA (233 aa)) constitute a Radical SAM core domain. In terms of domain architecture, TRAM spans 378–441 (RRMLGTVQRI…TNSLRGKIVR (64 aa)).

The protein belongs to the methylthiotransferase family. MiaB subfamily. Monomer. The cofactor is [4Fe-4S] cluster.

It is found in the cytoplasm. It carries out the reaction N(6)-dimethylallyladenosine(37) in tRNA + (sulfur carrier)-SH + AH2 + 2 S-adenosyl-L-methionine = 2-methylsulfanyl-N(6)-dimethylallyladenosine(37) in tRNA + (sulfur carrier)-H + 5'-deoxyadenosine + L-methionine + A + S-adenosyl-L-homocysteine + 2 H(+). Catalyzes the methylthiolation of N6-(dimethylallyl)adenosine (i(6)A), leading to the formation of 2-methylthio-N6-(dimethylallyl)adenosine (ms(2)i(6)A) at position 37 in tRNAs that read codons beginning with uridine. This chain is tRNA-2-methylthio-N(6)-dimethylallyladenosine synthase, found in Klebsiella pneumoniae (strain 342).